We begin with the raw amino-acid sequence, 242 residues long: MASRQAYKRLSKEYKMMTENPPPYIVAAPKEDNILVWHYVITGPPETPYEDGQYHGTLVFPNDYPFNPPAIRMLTPNGRFRENTRLCLSMSDYHPDTWNPSWSVATILTGLLSFMTTDESSIGTMESTDSTKRKYAAKSKEHNATRSPIFCQIFPELAEQNRRDIEEAKKRKDETVVEDEHPFKQEQVVSLEEINDPEDRIRAQMLQQPAGNGTTSNSIGRSLLFVLFSLAALLVAVCYTRV.

At Met1–Asn217 the chain is on the cytoplasmic side. The UBC core domain maps to Gln5–Arg163. Cys87 (glycyl thioester intermediate) is an active-site residue. A helical membrane pass occupies residues Ser218–Thr240.

It belongs to the ubiquitin-conjugating enzyme family.

The protein localises to the endoplasmic reticulum membrane. The catalysed reaction is S-ubiquitinyl-[E1 ubiquitin-activating enzyme]-L-cysteine + [E2 ubiquitin-conjugating enzyme]-L-cysteine = [E1 ubiquitin-activating enzyme]-L-cysteine + S-ubiquitinyl-[E2 ubiquitin-conjugating enzyme]-L-cysteine.. It participates in protein modification; protein ubiquitination. In terms of biological role, catalyzes the covalent attachment of ubiquitin to other proteins. Functions in degradation of misfolded or regulated proteins localized in the endoplasmic reticulum (ER) lumen or membrane via the ubiquitin-proteasome system. Cognate E2 conjugating enzyme for the DOA10 ubiquitin ligase complex, which is part of the ERAD-C pathway responsible for the rapid degradation of membrane proteins with misfolded cytoplasmic domains. The chain is Ubiquitin-conjugating enzyme E2 6 (UBC6) from Eremothecium gossypii (strain ATCC 10895 / CBS 109.51 / FGSC 9923 / NRRL Y-1056) (Yeast).